Consider the following 668-residue polypeptide: MFDYLENEEVALDELKQMLRDRDPNDTRNQFKNNALHAYLFNEHCNNVEVVKLLLDSGTNPLHKNWRQLTPLGEYTNSRHGKVNKDIAMVLLEATGYSNINDFNIFTYMKSKNVDIDLIKVLVEHGFDFSVKCEKHHSVIENYVMTDDPVPEIIDLFIENGCSVIYEDEDDEYGYAYEEYHSQNDDYQPRNCGTVLHLYIISHLYSESDSRSCVNPEVVKCLINHGINPSSIDKNYCTALQYYIKSSHIDIDIVKLLMKGIDNTAYSYIDDLTCCTRGIMADYLNSDYRYNKDVDLDLVKLFLENGKPHGIMCSIVPLWRNDKETISLILKTMNSDVLQHILIEYITFSDIDISLVEYMLEYGAVVNKEAIHGYFKNINIDSYTMKYLLKKEGGDAVNHLDDGEIPIGHLCKSNYGRYNFYTDTYRQGFRDMSYACPILSTINICLPYLKDINMIDKRGETLLHKAVRYNKQSLVSLLLESGSDVNIRSNNGYTCIAIAINESRNIELLNMLLCHKPTLDCVIDSLREISNIVDNAYAIKQCIRYAMIIDDCISSKIPESISKHYNDYIDICNQELNEMKKIIVGGNTMFSLIFTDHGAKIIHRYANNPELRAYYESKQNKIYVEVYDIISNAIVKHNKIHKNIESVDDNTYISNLPYTIKYKIFEQQ.

9 ANK repeats span residues 31-64 (FKNN…PLHK), 101-131 (NDFN…DFSV), 135-166 (KHHS…SVIY), 199-231 (YIIS…NPSS), 235-266 (NYCT…NTAY), 277-311 (RGIM…PHGI), 334-368 (NSDV…VVNK), 458-487 (RGET…DVNI), and 491-521 (NGYT…TLDC). Residues 586-666 (GNTMFSLIFT…PYTIKYKIFE (81 aa)) are PRANC/F-box-like.

It belongs to the orthopoxvirus OPG023 family. As to quaternary structure, interacts (via N-terminus) with host RELA. Interacts (via PRANC/F-box-like domain) with the SKP1 component of the host SCF ubiquitin ligase complex.

In terms of biological role, substrate-specific adapter of SKP1-containing E3 ubiquitin-protein ligases which mediate the ubiquitination and subsequent proteasomal degradation of host target proteins. Prevents activation and subsequent nuclear localization of NF-kappa-B in infected cells, by targeting NF-kappa-B RELA subunit to the SCF E3 ligase complex. This is Ankyrin repeat domain-containing protein OPG023 (OPG023) from Bos taurus (Bovine).